The chain runs to 897 residues: Serine/threonine-protein kinase ATG1 (897 aa).

In terms of domain architecture, Protein kinase spans 24–325 (YTAEKEIGKG…FEEFFANKVV (302 aa)). Residues 30–38 (IGKGSFATV) and K54 each bind ATP. The residue at position 34 (S34) is a Phosphoserine. A Phosphothreonine modification is found at T129. The active-site Proton acceptor is D172. The residue at position 226 (T226) is a Phosphothreonine; by autocatalysis. 3 positions are modified to phosphoserine: S304, S365, and S390. Positions 429–432 (YVVV) match the LIR motif. The disordered stretch occupies residues 490 to 509 (LLRATSSSSGGSDGSRRPSL). S508 and S515 each carry phosphoserine; by PKA. Phosphoserine is present on residues S533, S551, and S552. Position 590 is a phosphothreonine (T590). Phosphoserine occurs at positions 621, 635, 638, 647, 677, 680, 683, 769, and 783. The tract at residues 880–886 (DSIANRL) is required for Cvt trafficking.

It belongs to the protein kinase superfamily. Ser/Thr protein kinase family. APG1/unc-51/ULK1 subfamily. In terms of assembly, homodimer. Dimerization requires the presence of ATG13. Forms a ternary complex with ATG13 and ATG17. Also interacts with ATG11. Autophosphorylated at Thr-226 and Ser-390. The phosphorylation state may play a role in the induction of protein degradation upon starvation. Phosphorylation at Thr-226 within the activation loop is required for protein kinase activity whereas phosphorylation at Ser-34 leads to inhibition of kinase activity. Phosphorylation of Ser-508 and Ser-515 by PKA is required to induce autophagy but not for kinase activity.

The protein localises to the cytoplasm. Its subcellular location is the preautophagosomal structure membrane. The enzyme catalyses L-seryl-[protein] + ATP = O-phospho-L-seryl-[protein] + ADP + H(+). It carries out the reaction L-threonyl-[protein] + ATP = O-phospho-L-threonyl-[protein] + ADP + H(+). Activated by hypophosphorylated form of ATG13 (present in nitrogen starvation conditions). Also activated by autophopsphorylation of Thr-226 and inhibited by phosphorylation of Ser-34. Functionally, serine/threonine protein kinase involved in the cytoplasm to vacuole transport (Cvt) and found to be essential in autophagy, where it is required for the formation of autophagosomes. Involved in the clearance of protein aggregates which cannot be efficiently cleared by the proteasome. Required for selective autophagic degradation of the nucleus (nucleophagy) as well as for mitophagy which contributes to regulate mitochondrial quantity and quality by eliminating the mitochondria to a basal level to fulfill cellular energy requirements and preventing excess ROS production. Also involved in endoplasmic reticulum-specific autophagic process, in selective removal of ER-associated degradation (ERAD) substrates. Plays a key role in ATG9 and ATG23 cycling through the pre-autophagosomal structure and is necessary to promote ATG18 binding to ATG9 through phosphorylation of ATG9. Catalyzes phosphorylation of ATG4, decreasing the interaction between ATG4 and ATG8 and impairing deconjugation of PE-conjugated forms of ATG8. Finally, ATG1 is also required for the maintenance of cell viability under starvation and for glycogen storage during stationary phase. Plays a role in genome stability through suppression of abnormal mitosis under starvation, and in regulation of filamentous growth. This is Serine/threonine-protein kinase ATG1 from Saccharomyces cerevisiae (strain YJM789) (Baker's yeast).